Consider the following 26-residue polypeptide: Dermaseptin-J4 (26 aa).

Val-26 is modified (valine amide).

Expressed by the skin glands.

It localises to the secreted. Its function is as follows. Has antimicrobial activity. This chain is Dermaseptin-J4, found in Phasmahyla jandaia (Jandaia leaf frog).